Consider the following 255-residue polypeptide: Uridylate kinase (255 aa).

An ATP-binding site is contributed by 22-25; that stretch reads KLSG. The interval 30–35 is involved in allosteric activation by GTP; sequence GNGGYG. Residue Gly64 coordinates UMP. ATP contacts are provided by Gly65 and Arg69. UMP-binding positions include Asp85 and 146-153; that span reads TGNPFFTT. ATP contacts are provided by Asn174, Tyr180, and Asp183.

Belongs to the UMP kinase family. Homohexamer.

The protein localises to the cytoplasm. The catalysed reaction is UMP + ATP = UDP + ADP. It participates in pyrimidine metabolism; CTP biosynthesis via de novo pathway; UDP from UMP (UMPK route): step 1/1. Allosterically activated by GTP. Inhibited by UTP. Its function is as follows. Catalyzes the reversible phosphorylation of UMP to UDP. The polypeptide is Uridylate kinase (Rubrobacter xylanophilus (strain DSM 9941 / JCM 11954 / NBRC 16129 / PRD-1)).